Here is a 184-residue protein sequence, read N- to C-terminus: Heme transporter hrg-4 (184 aa).

The chain crosses the membrane as a helical span at residues 19–39 (IGWTIFGIVFGISAILTYAIK). N-linked (GlcNAc...) asparagine glycosylation is present at asparagine 42. The next 3 membrane-spanning stretches (helical) occupy residues 46-66 (TATT…YWAL), 87-107 (VFIG…AGIT), and 124-146 (IYFS…WSLV).

This sequence belongs to the HRG family.

The protein localises to the cell membrane. Functionally, heme transporter that mediates heme uptake across the plasma membrane. The sequence is that of Heme transporter hrg-4 from Caenorhabditis elegans.